A 206-amino-acid chain; its full sequence is Probable metallo-hydrolase MJ0888 (206 aa).

7 residues coordinate Zn(2+): His55, His57, Asp59, His60, His130, Asp147, and His190.

The protein belongs to the metallo-beta-lactamase superfamily. The cofactor is Zn(2+).

In Methanocaldococcus jannaschii (strain ATCC 43067 / DSM 2661 / JAL-1 / JCM 10045 / NBRC 100440) (Methanococcus jannaschii), this protein is Probable metallo-hydrolase MJ0888.